The chain runs to 361 residues: MLYWLIDFSSSFPAFNVFRYITFRTGGAVVTGALFVFLCGPWIIDNLRLRQGKGQPIRADGPQSHLVTKRGTPTMGGLMILSGLTVGTVLWANPLNPYVWIVLAVTLGFGFVGFYDDYMKVTKQTHAGISGRTRLLIEFAIAGAACFALVWLGRGSLSSSLVIPFFKEVVLNLGWYFVIFGAFVIVGAGNAVNLTDGLDGLAIVPVMIAAASFGMISYLVGNAVFAEYLQINYVAGTGELAVLCGALLGAGLGFLWFNAPPASIFMGDTGSLALGGMLGSIAVAVKHEIVLAVIGGLFVLEAVSVIVQVASFKLTGKRVFRMAPIHHHFEQKGWTEPQIVIRFWIIAVILALAGLSTLKLR.

The next 10 helical transmembrane spans lie at T25–D45, T72–A92, L95–Y115, L135–G155, V169–G189, G200–V220, L240–P260, I264–A284, I289–V309, and Q338–L358.

It belongs to the glycosyltransferase 4 family. MraY subfamily. It depends on Mg(2+) as a cofactor.

It localises to the cell inner membrane. The catalysed reaction is UDP-N-acetyl-alpha-D-muramoyl-L-alanyl-gamma-D-glutamyl-meso-2,6-diaminopimeloyl-D-alanyl-D-alanine + di-trans,octa-cis-undecaprenyl phosphate = di-trans,octa-cis-undecaprenyl diphospho-N-acetyl-alpha-D-muramoyl-L-alanyl-D-glutamyl-meso-2,6-diaminopimeloyl-D-alanyl-D-alanine + UMP. It functions in the pathway cell wall biogenesis; peptidoglycan biosynthesis. In terms of biological role, catalyzes the initial step of the lipid cycle reactions in the biosynthesis of the cell wall peptidoglycan: transfers peptidoglycan precursor phospho-MurNAc-pentapeptide from UDP-MurNAc-pentapeptide onto the lipid carrier undecaprenyl phosphate, yielding undecaprenyl-pyrophosphoryl-MurNAc-pentapeptide, known as lipid I. The chain is Phospho-N-acetylmuramoyl-pentapeptide-transferase from Rhodopseudomonas palustris (strain HaA2).